Here is a 204-residue protein sequence, read N- to C-terminus: Protein DESIGUAL 4 (204 aa).

4 helical membrane passes run 13–33, 60–80, 107–127, and 143–163; these read IITV…VAGF, FVLG…ANVI, CLFL…NGIW, and VFSI…IYYI. The disordered stretch occupies residues 177–204; sequence KPNKTKPSELKPIPTEPNEAEPNSTPNP. A glycan (N-linked (GlcNAc...) asparagine) is linked at Asn179.

It belongs to the DESIGUAL family. In terms of tissue distribution, only expressed in inflorescences.

The protein resides in the endoplasmic reticulum membrane. The sequence is that of Protein DESIGUAL 4 from Arabidopsis thaliana (Mouse-ear cress).